Consider the following 105-residue polypeptide: Small ribosomal subunit protein uS10 (105 aa).

It belongs to the universal ribosomal protein uS10 family. As to quaternary structure, part of the 30S ribosomal subunit.

In terms of biological role, involved in the binding of tRNA to the ribosomes. The chain is Small ribosomal subunit protein uS10 from Lawsonia intracellularis (strain PHE/MN1-00).